We begin with the raw amino-acid sequence, 146 residues long: Putative inactive cytochrome P450 2G1 (146 aa).

Cysteine 91 serves as a coordination point for heme.

It belongs to the cytochrome P450 family. Requires heme as cofactor.

The polypeptide is Putative inactive cytochrome P450 2G1 (CYP2G1P) (Homo sapiens (Human)).